The sequence spans 293 residues: Ribosomal protein L11 methyltransferase (293 aa).

S-adenosyl-L-methionine is bound by residues threonine 145, glycine 166, aspartate 188, and asparagine 230.

This sequence belongs to the methyltransferase superfamily. PrmA family.

The protein localises to the cytoplasm. It carries out the reaction L-lysyl-[protein] + 3 S-adenosyl-L-methionine = N(6),N(6),N(6)-trimethyl-L-lysyl-[protein] + 3 S-adenosyl-L-homocysteine + 3 H(+). Methylates ribosomal protein L11. In Sodalis glossinidius (strain morsitans), this protein is Ribosomal protein L11 methyltransferase.